Reading from the N-terminus, the 403-residue chain is Phosphoglycerate kinase (403 aa).

Substrate contacts are provided by residues 22 to 24, Arg37, 60 to 63, Arg119, and Arg156; these read DLN and HLGR. ATP-binding positions include Lys206, Gly302, Glu333, and 359-362; that span reads GGDS.

Belongs to the phosphoglycerate kinase family. In terms of assembly, monomer.

It is found in the cytoplasm. The catalysed reaction is (2R)-3-phosphoglycerate + ATP = (2R)-3-phospho-glyceroyl phosphate + ADP. It participates in carbohydrate degradation; glycolysis; pyruvate from D-glyceraldehyde 3-phosphate: step 2/5. This is Phosphoglycerate kinase from Leifsonia xyli subsp. xyli (strain CTCB07).